A 355-amino-acid polypeptide reads, in one-letter code: uncharacterized protein (355 aa).

A helical transmembrane segment spans residues 6 to 26 (LLTPYFLLSILSVGVFTATAA).

This sequence belongs to the SUN family.

Its subcellular location is the membrane. This is an uncharacterized protein from Saccharomyces cerevisiae (strain ATCC 204508 / S288c) (Baker's yeast).